The chain runs to 304 residues: Ribosomal RNA small subunit methyltransferase H (304 aa).

S-adenosyl-L-methionine-binding positions include 37–39 (GGH), Asp57, Phe85, Asp100, and His107.

This sequence belongs to the methyltransferase superfamily. RsmH family.

It localises to the cytoplasm. It catalyses the reaction cytidine(1402) in 16S rRNA + S-adenosyl-L-methionine = N(4)-methylcytidine(1402) in 16S rRNA + S-adenosyl-L-homocysteine + H(+). Its function is as follows. Specifically methylates the N4 position of cytidine in position 1402 (C1402) of 16S rRNA. This Azobacteroides pseudotrichonymphae genomovar. CFP2 protein is Ribosomal RNA small subunit methyltransferase H.